Reading from the N-terminus, the 431-residue chain is Glutamate--tRNA ligase 1 (431 aa).

The short motif at 11 to 21 (PSPTGDLHLGG) is the 'HIGH' region element. The 'KMSKS' region signature appears at 203-207 (KLSKR). Residue Lys-206 participates in ATP binding.

The protein belongs to the class-I aminoacyl-tRNA synthetase family. Glutamate--tRNA ligase type 1 subfamily. In terms of assembly, monomer.

It localises to the cytoplasm. It carries out the reaction tRNA(Glu) + L-glutamate + ATP = L-glutamyl-tRNA(Glu) + AMP + diphosphate. Catalyzes the attachment of glutamate to tRNA(Glu) in a two-step reaction: glutamate is first activated by ATP to form Glu-AMP and then transferred to the acceptor end of tRNA(Glu). The chain is Glutamate--tRNA ligase 1 from Rubrobacter xylanophilus (strain DSM 9941 / JCM 11954 / NBRC 16129 / PRD-1).